Consider the following 124-residue polypeptide: Small ribosomal subunit protein uS12 (124 aa).

Positions 1-25 are disordered; that stretch reads MPTINQLIRKPRKSQKEKTASPALQ. Asp89 bears the 3-methylthioaspartic acid mark.

It belongs to the universal ribosomal protein uS12 family. As to quaternary structure, part of the 30S ribosomal subunit. Contacts proteins S8 and S17. May interact with IF1 in the 30S initiation complex.

With S4 and S5 plays an important role in translational accuracy. Its function is as follows. Interacts with and stabilizes bases of the 16S rRNA that are involved in tRNA selection in the A site and with the mRNA backbone. Located at the interface of the 30S and 50S subunits, it traverses the body of the 30S subunit contacting proteins on the other side and probably holding the rRNA structure together. The combined cluster of proteins S8, S12 and S17 appears to hold together the shoulder and platform of the 30S subunit. The sequence is that of Small ribosomal subunit protein uS12 from Borrelia turicatae (strain 91E135).